The sequence spans 127 residues: Biogenesis of lysosome-related organelles complex 1 subunit BLS1 (127 aa).

Residues 103-127 (KNSHNTNHGGCNKTKNSSKDKLLDK) are disordered. A compositionally biased stretch (polar residues) spans 105 to 117 (SHNTNHGGCNKTK).

The protein belongs to the BLOC1S1 family. In terms of assembly, component of the biogenesis of lysosome-related organelles complex-1 (BLOC-1).

The protein localises to the endosome. Functionally, component of the biogenesis of lysosome-related organelles complex-1 (BLOC-1), a complex involved in endosomal cargo sorting. The sequence is that of Biogenesis of lysosome-related organelles complex 1 subunit BLS1 (BLS1) from Vanderwaltozyma polyspora (strain ATCC 22028 / DSM 70294 / BCRC 21397 / CBS 2163 / NBRC 10782 / NRRL Y-8283 / UCD 57-17) (Kluyveromyces polysporus).